A 405-amino-acid polypeptide reads, in one-letter code: MQYTEIMVRYGELSTKGKNRNDFIGRLNGNVTKALHEYKQLRIHPKRDRMHIILNGDDAEGVIERLRHVFGIQNFSPSIEVNRDLDSVKETALAMMKEIGKPGMTFKVNTRRSDHNFFLDTNDMNRELGGYLSDELPELEVQMKKPDITLRVEIRQDAIYLTNQVIQGAGGLPVGSAGKGMLMLSGGIDSPVAGYLTLKRGVDIEMVHFFSPPYTSDNALNKAKELTAKLVPYVGGIKFIEVPFTEIQEEVKHSVPEGYLMTIQRRMMLRLTDQIRAKRQGLAIFNGESVGQVASQTLESMMAINDVTTTPIVRPVATMDKNEIIEIAKDIDTYDLSIMPFEDCCTIFAPPAPKTRPNLDKTRFYEQRIDVDALIERSLVGVKVTEIKAGDQFLNQDEEIIAELL.

The region spanning 60 to 165 (EGVIERLRHV…QDAIYLTNQV (106 aa)) is the THUMP domain. Residues 183–184 (ML), 208–209 (HF), Arg265, Gly287, and Gln296 contribute to the ATP site.

This sequence belongs to the ThiI family.

Its subcellular location is the cytoplasm. It carries out the reaction [ThiI sulfur-carrier protein]-S-sulfanyl-L-cysteine + a uridine in tRNA + 2 reduced [2Fe-2S]-[ferredoxin] + ATP + H(+) = [ThiI sulfur-carrier protein]-L-cysteine + a 4-thiouridine in tRNA + 2 oxidized [2Fe-2S]-[ferredoxin] + AMP + diphosphate. It catalyses the reaction [ThiS sulfur-carrier protein]-C-terminal Gly-Gly-AMP + S-sulfanyl-L-cysteinyl-[cysteine desulfurase] + AH2 = [ThiS sulfur-carrier protein]-C-terminal-Gly-aminoethanethioate + L-cysteinyl-[cysteine desulfurase] + A + AMP + 2 H(+). It functions in the pathway cofactor biosynthesis; thiamine diphosphate biosynthesis. In terms of biological role, catalyzes the ATP-dependent transfer of a sulfur to tRNA to produce 4-thiouridine in position 8 of tRNAs, which functions as a near-UV photosensor. Also catalyzes the transfer of sulfur to the sulfur carrier protein ThiS, forming ThiS-thiocarboxylate. This is a step in the synthesis of thiazole, in the thiamine biosynthesis pathway. The sulfur is donated as persulfide by IscS. The sequence is that of Probable tRNA sulfurtransferase from Latilactobacillus sakei subsp. sakei (strain 23K) (Lactobacillus sakei subsp. sakei).